Here is a 514-residue protein sequence, read N- to C-terminus: 2,3-bisphosphoglycerate-independent phosphoglycerate mutase (514 aa).

Mn(2+)-binding residues include D14 and S64. The Phosphoserine intermediate role is filled by S64. Substrate-binding positions include H125, 155-156, R187, R193, 263-266, and K336; these read RD and RADR. Mn(2+) is bound by residues D403, H407, D444, H445, and H463.

It belongs to the BPG-independent phosphoglycerate mutase family. In terms of assembly, monomer. Mn(2+) serves as cofactor.

The catalysed reaction is (2R)-2-phosphoglycerate = (2R)-3-phosphoglycerate. It participates in carbohydrate degradation; glycolysis; pyruvate from D-glyceraldehyde 3-phosphate: step 3/5. In terms of biological role, catalyzes the interconversion of 2-phosphoglycerate and 3-phosphoglycerate. The protein is 2,3-bisphosphoglycerate-independent phosphoglycerate mutase of Salmonella choleraesuis (strain SC-B67).